The following is a 151-amino-acid chain: Endoribonuclease YbeY (151 aa).

His117, His121, and His127 together coordinate Zn(2+).

The protein belongs to the endoribonuclease YbeY family. It depends on Zn(2+) as a cofactor.

It localises to the cytoplasm. Single strand-specific metallo-endoribonuclease involved in late-stage 70S ribosome quality control and in maturation of the 3' terminus of the 16S rRNA. This chain is Endoribonuclease YbeY, found in Alkaliphilus oremlandii (strain OhILAs) (Clostridium oremlandii (strain OhILAs)).